A 464-amino-acid polypeptide reads, in one-letter code: Cyclin-dependent kinase 8 (464 aa).

The interval 1-15 is interaction with CCNC; it reads MDYDFKVKLSSERER. The region spanning 21–335 is the Protein kinase domain; the sequence is EYEGCKVGRG…SEQAMQDPYF (315 aa). ATP-binding positions include 27-35 and Lys52; that span reads VGRGTYGHV. Asp151 functions as the Proton acceptor in the catalytic mechanism. The segment at 358–464 is disordered; the sequence is FLTEEEPDEK…PQYSHQTHRY (107 aa). Residues 373–391 show a composition bias toward low complexity; that stretch reads QQQQQGNNHTNGTGHPGNQ. Composition is skewed to polar residues over residues 409–426 and 436–464; these read PTTTSGGLIMTSDYQRSN and PSTSQPQSSMGYSATSQQPPQYSHQTHRY.

Belongs to the protein kinase superfamily. CMGC Ser/Thr protein kinase family. CDC2/CDKX subfamily. Component of the Mediator complex, which is composed of MED1, MED4, MED6, MED7, MED8, MED9, MED10, MED11, MED12, MED13, MED13L, MED14, MED15, MED16, MED17, MED18, MED19, MED20, MED21, MED22, MED23, MED24, MED25, MED26, MED27, MED29, MED30, MED31, CCNC, CDK8 and CDC2L6/CDK11. The MED12, MED13, CCNC and CDK8 subunits form a distinct module termed the CDK8 module. Mediator containing the CDK8 module is less active than Mediator lacking this module in supporting transcriptional activation. Individual preparations of the Mediator complex lacking one or more distinct subunits have been variously termed ARC, CRSP, DRIP, PC2, SMCC and TRAP. The cylin/CDK pair formed by CCNC/CDK8 also associates with the large subunit of RNA polymerase II. Interacts with CTNNB1, GLI3 and MAML1. The cofactor is Mg(2+).

The protein resides in the nucleus. It carries out the reaction L-seryl-[protein] + ATP = O-phospho-L-seryl-[protein] + ADP + H(+). The catalysed reaction is L-threonyl-[protein] + ATP = O-phospho-L-threonyl-[protein] + ADP + H(+). It catalyses the reaction [DNA-directed RNA polymerase] + ATP = phospho-[DNA-directed RNA polymerase] + ADP + H(+). Component of the Mediator complex, a coactivator involved in regulated gene transcription of nearly all RNA polymerase II-dependent genes. Mediator functions as a bridge to convey information from gene-specific regulatory proteins to the basal RNA polymerase II transcription machinery. Mediator is recruited to promoters by direct interactions with regulatory proteins and serves as a scaffold for the assembly of a functional pre-initiation complex with RNA polymerase II and the general transcription factors. Phosphorylates the CTD (C-terminal domain) of the large subunit of RNA polymerase II (RNAp II), which may inhibit the formation of a transcription initiation complex. Phosphorylates CCNH leading to down-regulation of the TFIIH complex and transcriptional repression. Recruited through interaction with MAML1 to hyperphosphorylate the intracellular domain of NOTCH, leading to its degradation. In Mus musculus (Mouse), this protein is Cyclin-dependent kinase 8 (Cdk8).